A 420-amino-acid polypeptide reads, in one-letter code: Dihydrolipoyllysine-residue succinyltransferase component of 2-oxoglutarate dehydrogenase complex (420 aa).

Residues 1 to 76 (MAEVKVPELA…EVGQAVAVVG (76 aa)) form the Lipoyl-binding domain. K42 is subject to N6-lipoyllysine. The tract at residues 75–201 (VGEGQVNTSN…EKMSRRKKTA (127 aa)) is disordered. Residues 81-90 (NTSNDSSNES) are compositionally biased toward polar residues. The span at 91 to 102 (SQKDEAKEKETP) shows a compositional bias: basic and acidic residues. Polar residues predominate over residues 103–127 (KQSNPNSSESENTQDNSQQRINATP). The region spanning 124–160 (NATPSARRHARKNGVDLSEVSGKGNDVLRKDDVENSQ) is the Peripheral subunit-binding (PSBD) domain. Over residues 149 to 158 (DVLRKDDVEN) the composition is skewed to basic and acidic residues. Residues 159–188 (SQKSSSQTAKSESKSQNSGSKQSNNNPSKP) show a composition bias toward low complexity. Catalysis depends on residues H391 and D395.

Belongs to the 2-oxoacid dehydrogenase family. Forms a 24-polypeptide structural core with octahedral symmetry. Part of the 2-oxoglutarate dehydrogenase (OGDH) complex composed of E1 (2-oxoglutarate dehydrogenase), E2 (dihydrolipoamide succinyltransferase) and E3 (dihydrolipoamide dehydrogenase); the complex contains multiple copies of the three enzymatic components (E1, E2 and E3). (R)-lipoate serves as cofactor.

The catalysed reaction is N(6)-[(R)-dihydrolipoyl]-L-lysyl-[protein] + succinyl-CoA = N(6)-[(R)-S(8)-succinyldihydrolipoyl]-L-lysyl-[protein] + CoA. Its pathway is amino-acid degradation; L-lysine degradation via saccharopine pathway; glutaryl-CoA from L-lysine: step 6/6. E2 component of the 2-oxoglutarate dehydrogenase (OGDH) complex which catalyzes the second step in the conversion of 2-oxoglutarate to succinyl-CoA and CO(2). This Staphylococcus epidermidis (strain ATCC 12228 / FDA PCI 1200) protein is Dihydrolipoyllysine-residue succinyltransferase component of 2-oxoglutarate dehydrogenase complex (odhB).